Reading from the N-terminus, the 305-residue chain is Protein MFI (305 aa).

In terms of assembly, can homodimerize. Interacts with MFF; the interaction inhibits MFF interaction with DNM1L.

The protein localises to the cytoplasm. It localises to the cytosol. The protein resides in the mitochondrion outer membrane. Functionally, acts as an inhibitor of mitochondrial fission. Interacts with MFF and prevents DNM1L recruitment to mitochondria, promoting a more fused mitochondrial network. The polypeptide is Protein MFI (Rattus norvegicus (Rat)).